The primary structure comprises 845 residues: ABC transporter A family member 9 (845 aa).

The next 7 membrane-spanning stretches (helical) occupy residues 33-53, 192-212, 235-255, 292-312, 318-338, 347-367, and 417-437; these read CVQI…NFWV, AFVA…FLGG, IASL…MPLF, IYFI…FAVF, FAMF…SFFL, AASI…SILS, and SKII…ALYL. One can recognise an ABC transporter domain in the interval 531–762; sequence VIIEGLTKHY…FGDGYSVRIN (232 aa). Position 565–572 (565–572) interacts with ATP; that stretch reads GANGAGKT.

The protein belongs to the ABC transporter superfamily. ABCA family.

It is found in the membrane. This chain is ABC transporter A family member 9 (abcA9), found in Dictyostelium discoideum (Social amoeba).